The primary structure comprises 949 residues: AP-1 complex subunit beta-1 (949 aa).

The residue at position 318 (lysine 318) is an N6-acetyllysine. 3'-nitrotyrosine is present on tyrosine 574. A disordered region spans residues 584–625 (GGRGVVHKSLPPRTASSESAESPETAPTGAPPGEQPDVIPAQ). A compositionally biased stretch (low complexity) spans 594–611 (PPRTASSESAESPETAPT).

The protein belongs to the adaptor complexes large subunit family. In terms of assembly, adaptor protein complex 1 (AP-1) is a heterotetramer composed of two large adaptins (gamma-type subunit AP1G1 and beta-type subunit AP1B1), a medium adaptin (mu-type subunit AP1M1 or AP1M2) and a small adaptin (sigma-type subunit AP1S1 or AP1S2 or AP1S3). In terms of tissue distribution, widely expressed.

Its subcellular location is the golgi apparatus. It localises to the cytoplasmic vesicle. The protein localises to the clathrin-coated vesicle membrane. Subunit of clathrin-associated adaptor protein complex 1 that plays a role in protein sorting in the late-Golgi/trans-Golgi network (TGN) and/or endosomes. The AP complexes mediate both the recruitment of clathrin to membranes and the recognition of sorting signals within the cytosolic tails of transmembrane cargo molecules. The polypeptide is AP-1 complex subunit beta-1 (AP1B1) (Homo sapiens (Human)).